We begin with the raw amino-acid sequence, 470 residues long: MTLKLYDTMTRAKRDFVPSDPERVTMYVCGPTVYNYAHIGNFRPVVVFDLLFRVLRALYGEDHVLYAANVTDVDDKINRKAAEEGVPIGVVAERYLAAYNADARALGALAPTFQPKVTETMDAIVGMIGRLVDNGAAYAAEGHVLFSTEAFPDYGKLSGRPLEDLIAGARVDVAPYKKDPRDFVLWKPSKPGEPEWESPWGPGRPGWHIECSAMIEEALGLPIDIHGGGIDLVFPHHENELAQGVCAAHPHGHGQTYARYWLHNGFLNMAEEKMSKSVGNVALAHDLLKTWPGEALRWALLSGQYRQPLEWTDTLIEQAKSALDRLYRVLDDAARPGDAAAEPFVDPRVEAALHDDLNTPAAMAALFQISDELRSAIMRKDAAAVAEGRGRLVGSANLMGFLAQAPQAWFQSGADEDLKARVEDLLAQRQAARAAKDWPRADQIRAELAALNVEVMDGPSGATWRIKEQA.

Cysteine 29 contributes to the Zn(2+) binding site. Positions 31–41 match the 'HIGH' region motif; it reads PTVYNYAHIGN. 3 residues coordinate Zn(2+): cysteine 211, histidine 236, and glutamate 240. Positions 273 to 277 match the 'KMSKS' region motif; the sequence is KMSKS. Residue lysine 276 participates in ATP binding.

It belongs to the class-I aminoacyl-tRNA synthetase family. As to quaternary structure, monomer. Zn(2+) serves as cofactor.

It is found in the cytoplasm. It catalyses the reaction tRNA(Cys) + L-cysteine + ATP = L-cysteinyl-tRNA(Cys) + AMP + diphosphate. The polypeptide is Cysteine--tRNA ligase (Phenylobacterium zucineum (strain HLK1)).